Here is a 190-residue protein sequence, read N- to C-terminus: Xanthine phosphoribosyltransferase (190 aa).

2 residues coordinate xanthine: L20 and N27. 128 to 132 (ANGKA) serves as a coordination point for 5-phospho-alpha-D-ribose 1-diphosphate. K156 contributes to the xanthine binding site.

This sequence belongs to the purine/pyrimidine phosphoribosyltransferase family. Xpt subfamily. Homodimer.

Its subcellular location is the cytoplasm. The enzyme catalyses XMP + diphosphate = xanthine + 5-phospho-alpha-D-ribose 1-diphosphate. The protein operates within purine metabolism; XMP biosynthesis via salvage pathway; XMP from xanthine: step 1/1. Its function is as follows. Converts the preformed base xanthine, a product of nucleic acid breakdown, to xanthosine 5'-monophosphate (XMP), so it can be reused for RNA or DNA synthesis. This Pseudomonas putida (strain ATCC 700007 / DSM 6899 / JCM 31910 / BCRC 17059 / LMG 24140 / F1) protein is Xanthine phosphoribosyltransferase.